A 622-amino-acid polypeptide reads, in one-letter code: DNA polymerase II small subunit (622 aa).

A disordered region spans residues 76–113 (ISTGEGSQKVPDHEELEKITNESSVESSISTGETPKTE). A compositionally biased stretch (basic and acidic residues) spans 85 to 95 (VPDHEELEKIT). Residues 96–109 (NESSVESSISTGET) show a composition bias toward polar residues.

This sequence belongs to the DNA polymerase delta/II small subunit family. In terms of assembly, heterodimer of a large subunit and a small subunit.

The enzyme catalyses DNA(n) + a 2'-deoxyribonucleoside 5'-triphosphate = DNA(n+1) + diphosphate. It carries out the reaction Exonucleolytic cleavage in the 3'- to 5'-direction to yield nucleoside 5'-phosphates.. Functionally, possesses two activities: a DNA synthesis (polymerase) and an exonucleolytic activity that degrades single-stranded DNA in the 3' to 5' direction. Has a template-primer preference which is characteristic of a replicative DNA polymerase. The chain is DNA polymerase II small subunit (polB) from Pyrococcus horikoshii (strain ATCC 700860 / DSM 12428 / JCM 9974 / NBRC 100139 / OT-3).